Reading from the N-terminus, the 112-residue chain is UPF0102 protein CHAB381_0216 (112 aa).

This sequence belongs to the UPF0102 family.

The polypeptide is UPF0102 protein CHAB381_0216 (Campylobacter hominis (strain ATCC BAA-381 / DSM 21671 / CCUG 45161 / LMG 19568 / NCTC 13146 / CH001A)).